Here is a 637-residue protein sequence, read N- to C-terminus: 1-deoxy-D-xylulose-5-phosphate synthase (637 aa).

Residues histidine 76 and 117 to 119 (GHS) contribute to the thiamine diphosphate site. Aspartate 148 provides a ligand contact to Mg(2+). Thiamine diphosphate is bound by residues 149–150 (GA), asparagine 177, tyrosine 294, and glutamate 381. Residue asparagine 177 participates in Mg(2+) binding.

This sequence belongs to the transketolase family. DXPS subfamily. Homodimer. It depends on Mg(2+) as a cofactor. Thiamine diphosphate serves as cofactor.

It carries out the reaction D-glyceraldehyde 3-phosphate + pyruvate + H(+) = 1-deoxy-D-xylulose 5-phosphate + CO2. It functions in the pathway metabolic intermediate biosynthesis; 1-deoxy-D-xylulose 5-phosphate biosynthesis; 1-deoxy-D-xylulose 5-phosphate from D-glyceraldehyde 3-phosphate and pyruvate: step 1/1. Functionally, catalyzes the acyloin condensation reaction between C atoms 2 and 3 of pyruvate and glyceraldehyde 3-phosphate to yield 1-deoxy-D-xylulose-5-phosphate (DXP). This Neisseria gonorrhoeae (strain NCCP11945) protein is 1-deoxy-D-xylulose-5-phosphate synthase.